A 60-amino-acid chain; its full sequence is Snake venom metalloproteinase bothrojaractivase (60 aa).

Residues 1-60 enclose the Peptidase M12B domain; sequence RYIELAVVADHGMFTKYRVHELVNTVNGFFRSKQDLIKVQKDKTLTSFGEWRERDLLPRI. Ca(2+) is bound at residue E4.

It belongs to the venom metalloproteinase (M12B) family. P-I subfamily. In terms of assembly, monomer. It depends on Zn(2+) as a cofactor. As to expression, expressed by the venom gland.

Its subcellular location is the secreted. Completely inhibited by EDTA and EGTA. Partially inhibited by serine proteinase inhibitors PMSF and benzamidine. Not inhibited by cysteine proteinase inhibitors mercury ions and E-64. Is active without cofactors, although the presence of low concentrations of calcium and zinc ions enhanced its ability to convert prothrombin (F2) into active thrombin. Prothrombin (F2) activator that is cofactor-independent. Also has fibrinolytic and fibrinogenolytic activity. It degrades the Aalpha-chain and more slowly the Bbeta-chain of fibrin and fibrinogen, while the gamma-chain is only partially and slowly affected. A dose-dependent procoagulant activity is shown in human plasma. The polypeptide is Snake venom metalloproteinase bothrojaractivase (Bothrops jararaca (Jararaca)).